Consider the following 1723-residue polypeptide: Homeobox protein 5 (1723 aa).

Residues 36 to 50 (QLQQPQHQPQHYQQQ) are compositionally biased toward low complexity. Disordered stretches follow at residues 36-425 (QLQQ…APGT), 440-522 (SSSP…QLQQ), 543-756 (ENIT…PPLT), 878-978 (GTIV…TGSL), 1080-1214 (IFNN…SENN), 1226-1264 (VSLG…NQQQ), 1345-1399 (IVNN…TQTS), 1456-1498 (QQQQ…STTT), and 1513-1547 (HNQQ…SRRK). The segment covering 51–72 (DSFVSPNLDNNNPQIHVQSNNY) has biased composition (polar residues). 2 stretches are compositionally biased toward low complexity: residues 73–107 (NQNG…NNSS) and 114–212 (NNSS…NNNN). Composition is skewed to polar residues over residues 223–237 (SQPT…QHNP) and 244–257 (GQHN…MVMD). 2 stretches are compositionally biased toward low complexity: residues 258–284 (NNNN…NSNS) and 291–350 (NNNN…NNNN). Residues 300–351 (YNNNNNNNNNNNSNSNNNNNNNNNNNNNNNNNNNNNNNNNNNNNSNNNNNNQ) adopt a coiled-coil conformation. Residues 351 to 369 (QFSQSYDSTLGNNRFSSMM) show a composition bias toward polar residues. 2 stretches are compositionally biased toward low complexity: residues 371-421 (QPIQ…LIGS) and 440-465 (SSSP…LSSS). The segment covering 483 to 510 (MSSITNTNLKSTQASTLKESKRSNSSPN) has biased composition (polar residues). Composition is skewed to low complexity over residues 511–522 (LKKQMQLQQLQQ), 544–571 (NITN…ITNN), and 581–593 (NSNN…DSIN). Residues 632 to 655 (HISTTQQSPSLNGSTGGSMLTPTM) show a composition bias toward polar residues. Residues 660-669 (LSGGGSGGGF) are compositionally biased toward gly residues. The span at 673-685 (ISPTGTTSNKDLQ) shows a compositional bias: polar residues. Low complexity-rich tracts occupy residues 686-699 (SSPS…SMSM), 710-727 (SMSS…SNGL), and 734-745 (SNNMNSSGGIPT). Over residues 746–755 (PSTPTSPPPL) the composition is skewed to pro residues. The span at 882–928 (NPTNVNNNNINNNNNNNNNNNNNNNNNNNNNNNNNNNNTTTTTTTTT) shows a compositional bias: low complexity. Over residues 929-945 (SANTVQSGTTSNSNLVF) the composition is skewed to polar residues. Low complexity-rich tracts occupy residues 946–977 (QQTS…STGS) and 1082–1146 (NNNN…SINS). Polar residues-rich tracts occupy residues 1147 to 1159 (PRPS…NSSG) and 1176 to 1187 (DISTGLMASSDQ). Positions 1193–1270 (QQQQHQQLVN…NQQQILHQQL (78 aa)) form a coiled coil. Positions 1194–1214 (QQQHQQLVNNNNNNMNNSENN) are enriched in low complexity. A compositionally biased stretch (polar residues) spans 1226-1242 (VSLGSLPTNTPSSMEIE). Composition is skewed to low complexity over residues 1243–1264 (QQQQ…NQQQ), 1347–1384 (NNQN…TNTP), 1456–1480 (QQQQ…RSSP), 1487–1498 (SNTNTTTTSTTT), and 1518–1528 (SPISPRSPRSP). Residues 1431–1464 (VLQQQQQQQQQQQQQQQQQQQQQQQQQQQQQQET) adopt a coiled-coil conformation. The span at 1529–1543 (HGTSGDYNDGSQSPS) shows a compositional bias: polar residues. A DNA-binding region (homeobox) is located at residues 1543 to 1607 (SSRRKNRFTD…NKRARSRPSP (65 aa)). In terms of domain architecture, EF-hand spans 1553–1588 (FQIKRMNDCFENLDKNNNGKFTSEEICQIATELGLT). 2 disordered regions span residues 1598-1625 (NKRA…GNNS) and 1661-1723 (LHQQ…TINE). Over residues 1612-1625 (TNPLTSSTNNGNNS) the composition is skewed to low complexity. A coiled-coil region spans residues 1632–1702 (LQQQHLQQVQ…NNNNNNNNNN (71 aa)). Residues 1665-1675 (SANTTPQLNSM) show a composition bias toward polar residues. The segment covering 1676–1723 (NPNSINYNNNNNNNNNNNNNNNNNNNNNNNNNNNNNNIINNNITTINE) has biased composition (low complexity).

Its subcellular location is the nucleus. Putative transcription factor. The protein is Homeobox protein 5 (hbx5-1) of Dictyostelium discoideum (Social amoeba).